Here is a 375-residue protein sequence, read N- to C-terminus: tRNA-specific 2-thiouridylase MnmA (375 aa).

Residues 20 to 27 (AMSGGVDS) and L46 each bind ATP. C114 acts as the Nucleophile in catalysis. The cysteines at positions 114 and 211 are disulfide-linked. An ATP-binding site is contributed by G138. The interval 160 to 162 (RDQ) is interaction with tRNA. C211 functions as the Cysteine persulfide intermediate in the catalytic mechanism.

Belongs to the MnmA/TRMU family.

It localises to the cytoplasm. The catalysed reaction is S-sulfanyl-L-cysteinyl-[protein] + uridine(34) in tRNA + AH2 + ATP = 2-thiouridine(34) in tRNA + L-cysteinyl-[protein] + A + AMP + diphosphate + H(+). Functionally, catalyzes the 2-thiolation of uridine at the wobble position (U34) of tRNA, leading to the formation of s(2)U34. In Ruegeria pomeroyi (strain ATCC 700808 / DSM 15171 / DSS-3) (Silicibacter pomeroyi), this protein is tRNA-specific 2-thiouridylase MnmA.